The primary structure comprises 67 residues: MKASELREKKTEELENELLERRKEQFNLRMQKASGQLARTDQLGKVRRDVARIKTVLNERKRAERQA.

Belongs to the universal ribosomal protein uL29 family.

The chain is Large ribosomal subunit protein uL29 from Halorhodospira halophila (strain DSM 244 / SL1) (Ectothiorhodospira halophila (strain DSM 244 / SL1)).